The sequence spans 158 residues: Protein-export protein SecB (158 aa).

The protein belongs to the SecB family. Homotetramer, a dimer of dimers. One homotetramer interacts with 1 SecA dimer.

It localises to the cytoplasm. In terms of biological role, one of the proteins required for the normal export of preproteins out of the cell cytoplasm. It is a molecular chaperone that binds to a subset of precursor proteins, maintaining them in a translocation-competent state. It also specifically binds to its receptor SecA. This is Protein-export protein SecB from Anaplasma phagocytophilum (strain HZ).